A 630-amino-acid chain; its full sequence is 1-deoxy-D-xylulose-5-phosphate synthase (630 aa).

Residues H75 and 116 to 118 (GHS) each bind thiamine diphosphate. D147 is a binding site for Mg(2+). Residues 148 to 149 (GA), N176, Y287, and E367 contribute to the thiamine diphosphate site. Mg(2+) is bound at residue N176.

This sequence belongs to the transketolase family. DXPS subfamily. In terms of assembly, homodimer. The cofactor is Mg(2+). It depends on thiamine diphosphate as a cofactor.

It catalyses the reaction D-glyceraldehyde 3-phosphate + pyruvate + H(+) = 1-deoxy-D-xylulose 5-phosphate + CO2. The protein operates within metabolic intermediate biosynthesis; 1-deoxy-D-xylulose 5-phosphate biosynthesis; 1-deoxy-D-xylulose 5-phosphate from D-glyceraldehyde 3-phosphate and pyruvate: step 1/1. Its function is as follows. Catalyzes the acyloin condensation reaction between C atoms 2 and 3 of pyruvate and glyceraldehyde 3-phosphate to yield 1-deoxy-D-xylulose-5-phosphate (DXP). The polypeptide is 1-deoxy-D-xylulose-5-phosphate synthase (Treponema pallidum (strain Nichols)).